A 446-amino-acid polypeptide reads, in one-letter code: NADH-ubiquinone oxidoreductase chain 4 (446 aa).

13 helical membrane passes run 4-24 (IILF…YWMV), 56-76 (MLSY…LLAS), 93-113 (IVIL…FMFY), 114-134 (LFFE…GYQP), 141-161 (VYLL…IFYV), 182-202 (LLYF…LVHL), 212-232 (PVSG…YGLL), 245-265 (YSFV…LVCL), 272-292 (ALIA…LLTM), 297-317 (LCGS…LFCL), 330-350 (MLIN…WFLL), 373-393 (IVSW…FSAA), and 426-446 (LLHW…ILWL).

The protein belongs to the complex I subunit 4 family.

Its subcellular location is the mitochondrion membrane. It catalyses the reaction a ubiquinone + NADH + 5 H(+)(in) = a ubiquinol + NAD(+) + 4 H(+)(out). Its function is as follows. Core subunit of the mitochondrial membrane respiratory chain NADH dehydrogenase (Complex I) that is believed to belong to the minimal assembly required for catalysis. Complex I functions in the transfer of electrons from NADH to the respiratory chain. The immediate electron acceptor for the enzyme is believed to be ubiquinone. The chain is NADH-ubiquinone oxidoreductase chain 4 (mt:ND4) from Drosophila yakuba (Fruit fly).